The chain runs to 889 residues: Mitochondrial intermediate peptidase (889 aa).

A mitochondrion-targeting transit peptide spans 1–30; sequence MASTSKNAQRAAASVAHSYHVCLARRMSRL. The tract at residues 60–112 is disordered; sequence SSSLAAQRVQRPTSAGPILTNPISDHEKDNDELRSLFDAPPTSSSANHLRSSG. A compositionally biased stretch (basic and acidic residues) spans 83-94; sequence SDHEKDNDELRS. The span at 100–112 shows a compositional bias: polar residues; sequence PTSSSANHLRSSG. Residue H670 coordinates Zn(2+). Residue E671 is part of the active site. The Zn(2+) site is built by H674 and H677.

This sequence belongs to the peptidase M3 family. It depends on Zn(2+) as a cofactor.

The protein resides in the mitochondrion matrix. The enzyme catalyses Release of an N-terminal octapeptide as second stage of processing of some proteins imported into the mitochondrion.. Functionally, cleaves proteins, imported into the mitochondrion, to their mature size. While most mitochondrial precursor proteins are processed to the mature form in one step by mitochondrial processing peptidase (MPP), the sequential cleavage by MIP of an octapeptide after initial processing by MPP is a required step for a subgroup of nuclear-encoded precursor proteins destined for the matrix or the inner membrane. The sequence is that of Mitochondrial intermediate peptidase (OCT1) from Mycosarcoma maydis (Corn smut fungus).